Reading from the N-terminus, the 201-residue chain is ATP-dependent Clp protease proteolytic subunit (201 aa).

Ser98 acts as the Nucleophile in catalysis. Residue His123 is part of the active site.

The protein belongs to the peptidase S14 family. In terms of assembly, fourteen ClpP subunits assemble into 2 heptameric rings which stack back to back to give a disk-like structure with a central cavity, resembling the structure of eukaryotic proteasomes.

The protein localises to the cytoplasm. The catalysed reaction is Hydrolysis of proteins to small peptides in the presence of ATP and magnesium. alpha-casein is the usual test substrate. In the absence of ATP, only oligopeptides shorter than five residues are hydrolyzed (such as succinyl-Leu-Tyr-|-NHMec, and Leu-Tyr-Leu-|-Tyr-Trp, in which cleavage of the -Tyr-|-Leu- and -Tyr-|-Trp bonds also occurs).. Cleaves peptides in various proteins in a process that requires ATP hydrolysis. Has a chymotrypsin-like activity. Plays a major role in the degradation of misfolded proteins. The chain is ATP-dependent Clp protease proteolytic subunit from Desulfatibacillum aliphaticivorans.